Consider the following 1220-residue polypeptide: Plasma membrane calcium-transporting ATPase 1 (1220 aa).

Gly-2 is modified (N-acetylglycine). Residues 2–105 are Cytoplasmic-facing; it reads GDMANNSVAY…KTFLQLVWEA (104 aa). 2 positions are modified to phosphoserine: Ser-8 and Ser-17. Residues 106 to 126 form a helical membrane-spanning segment; that stretch reads LQDVTLIILEIAAIVSLGLSF. The Extracellular segment spans residues 127-154; that stretch reads YQPPEGDNALCGEVSVGEEEGEGETGWI. The chain crosses the membrane as a helical span at residues 155–175; the sequence is EGAAILLSVVCVVLVTAFNDW. Residues 176 to 366 lie on the Cytoplasmic side of the membrane; the sequence is SKEKQFRGLQ…KEKSVLQGKL (191 aa). Residues 297-356 form a disordered region; the sequence is EEEKKDEKKKEKKNKKQDGAIENRNKAKAQDGAAMEMQPLKSEEGGDGDEKDKKKANLPK. Composition is skewed to basic and acidic residues over residues 312–325 and 337–356; these read KQDG…KAKA and KSEE…NLPK. Ser-338 carries the phosphoserine modification. The chain crosses the membrane as a helical span at residues 367 to 386; the sequence is TKLAVQIGKAGLLMSAITVI. Over 387–418 the chain is Extracellular; the sequence is ILVLYFVIDTFWVQKRPWLAECTPIYIQYFVK. A helical membrane pass occupies residues 419–439; the sequence is FFIIGVTVLVVAVPEGLPLAV. Residues 440–855 lie on the Cytoplasmic side of the membrane; sequence TISLAYSVKK…RNVYDSISKF (416 aa). The active-site 4-aspartylphosphate intermediate is the Asp-475. Asp-475, Thr-477, and Asp-797 together coordinate Mg(2+). The helical transmembrane segment at 856-876 threads the bilayer; sequence LQFQLTVNVVAVIVAFTGACI. Residues 877–882 are Extracellular-facing; sequence TQDSPL. The chain crosses the membrane as a helical span at residues 883-903; the sequence is KAVQMLWVNLIMDTLASLALA. Topologically, residues 904–927 are cytoplasmic; sequence TEPPTESLLLRKPYGRNKPLISRT. The helical transmembrane segment at 928 to 948 threads the bilayer; that stretch reads MMKNILGHAFYQLVVVFTLLF. Residues 949–971 are Extracellular-facing; it reads AGEKFFDIDSGRNAPLHAPPSEH. Residues 972 to 991 traverse the membrane as a helical segment; that stretch reads YTIVFNTFVLMQLFNEINAR. Topologically, residues 992–1005 are cytoplasmic; the sequence is KIHGERNVFEGIFN. A helical membrane pass occupies residues 1006 to 1027; sequence NAIFCTIVLGTFVVQIIIVQFG. Residues 1028–1039 are Extracellular-facing; sequence GKPFSCSELSIE. Residues 1040 to 1060 traverse the membrane as a helical segment; it reads QWLWSIFLGMGTLLWGQLIST. The Cytoplasmic portion of the chain corresponds to 1061–1220; it reads IPTSRLKFLK…SPLHSLETSL (160 aa). Residues 1100–1117 form a calmodulin-binding subdomain A region; the sequence is LRRGQILWFRGLNRIQTQ. A Phosphothreonine; by PKC modification is found at Thr-1116. Residues 1118-1220 are required for basolateral membrane targeting; it reads IRVVNAFRSS…SPLHSLETSL (103 aa). A phosphoserine mark is found at Ser-1140 and Ser-1155. Positions 1160-1220 are disordered; it reads PLIDDTDAED…SPLHSLETSL (61 aa). A Phosphothreonine modification is found at Thr-1165. A Phosphoserine; by PKA modification is found at Ser-1178. Phosphoserine is present on Ser-1182. A compositionally biased stretch (polar residues) spans 1200 to 1220; the sequence is MNKSATSSSPGSPLHSLETSL.

It belongs to the cation transport ATPase (P-type) (TC 3.A.3) family. Type IIB subfamily. Monomer. Dimer. Oligomer. Calmodulin binding. Interacts with PDZD11. Interacts with SLC35G1 and STIM1; inhibits calcium-transporting ATPase activity after store depletion. Interacts with YWHAE; interacts with the monomeric and dimeric forms of the YWHAE but prefer the monomer form; this interaction inhibits calcium-transporting ATPase activity. Interacts with NPTN; this interaction stabilizes ATP2B1 and increases ATPase activity; this interaction controls T cell calcium homeostasis following T cell activation. Interacts with EPB41; regulates small intestinal calcium absorption through regulation of membrane expression of ATP2B1. In terms of tissue distribution, isoform B: Ubiquitously expressed. Isoform C: Found in brain cortex, skeletal muscle and heart muscle. Isoform D: Has only been found in fetal skeletal muscle. Isoform K: Found in small intestine and liver. Abundantly expressed in the endometrial epithelial cells and glandular epithelial cells in early-proliferative phase and early-secretory phases.

The protein resides in the cell membrane. Its subcellular location is the basolateral cell membrane. It localises to the synapse. It is found in the presynaptic cell membrane. The protein localises to the cytoplasmic vesicle. The protein resides in the secretory vesicle. Its subcellular location is the synaptic vesicle membrane. The enzyme catalyses Ca(2+)(in) + ATP + H2O = Ca(2+)(out) + ADP + phosphate + H(+). In terms of biological role, catalyzes the hydrolysis of ATP coupled with the transport of calcium from the cytoplasm to the extracellular space thereby maintaining intracellular calcium homeostasis. Plays a role in blood pressure regulation through regulation of intracellular calcium concentration and nitric oxide production leading to regulation of vascular smooth muscle cells vasoconstriction. Positively regulates bone mineralization through absorption of calcium from the intestine. Plays dual roles in osteoclast differentiation and survival by regulating RANKL-induced calcium oscillations in preosteoclasts and mediating calcium extrusion in mature osteoclasts. Regulates insulin sensitivity through calcium/calmodulin signaling pathway by regulating AKT1 activation and NOS3 activation in endothelial cells. May play a role in synaptic transmission by modulating calcium and proton dynamics at the synaptic vesicles. The chain is Plasma membrane calcium-transporting ATPase 1 from Homo sapiens (Human).